We begin with the raw amino-acid sequence, 347 residues long: MEFCVLFGGASFEHEISIVSAIALKGVLKDRIKYFIFLDENHHFYLIEASNMHSKYFAQIKEKKLPPLILTHKGLLKNSFLGAKIIELPLVINLVHGGDGEDGKLASLLEFYRIAFIGPRIEASVLSYNKYLTKLYAKDLGIKTLDHVLLNEKNRANAMDLINFNFPFIIKPNSAGSSLGVSVVKEEKELNYALDSAFEYSKEVLIEPFIQGVKEYNLAGCKIKKDFCFSYVEEPNKQEFLDFKQKYLDFSRTKAPKANLSNALEEQLKENFKKLYNDLFDGAIIRCDFFVIENEVYLNEINPIPGSLANYLFDDFKTTLENLAQSLPKTPKIQIKNSYLLQIQKNK.

Residues Lys134 to Lys332 enclose the ATP-grasp domain. Leu161 to Tyr216 is an ATP binding site. Asp288, Glu300, and Asn302 together coordinate Mg(2+).

It belongs to the D-alanine--D-alanine ligase family. Requires Mg(2+) as cofactor. Mn(2+) serves as cofactor.

Its subcellular location is the cytoplasm. The catalysed reaction is 2 D-alanine + ATP = D-alanyl-D-alanine + ADP + phosphate + H(+). It participates in cell wall biogenesis; peptidoglycan biosynthesis. In terms of biological role, cell wall formation. The chain is D-alanine--D-alanine ligase from Helicobacter pylori (strain HPAG1).